The sequence spans 66 residues: Large ribosomal subunit protein bL32 (66 aa).

It belongs to the bacterial ribosomal protein bL32 family.

This Leptospira interrogans serogroup Icterohaemorrhagiae serovar copenhageni (strain Fiocruz L1-130) protein is Large ribosomal subunit protein bL32.